The sequence spans 65 residues: Large ribosomal subunit protein bL28 (65 aa).

It belongs to the bacterial ribosomal protein bL28 family.

This chain is Large ribosomal subunit protein bL28, found in Lachnoclostridium phytofermentans (strain ATCC 700394 / DSM 18823 / ISDg) (Clostridium phytofermentans).